We begin with the raw amino-acid sequence, 380 residues long: Homoserine O-acetyltransferase (380 aa).

Residues 59-363 (NVVMVLHALT…IYGHDGFLVE (305 aa)) form the AB hydrolase-1 domain. The active-site Nucleophile is Ser-164. Arg-234 contacts substrate. Residues Asp-327 and His-357 contribute to the active site. Position 358 (Asp-358) interacts with substrate.

This sequence belongs to the AB hydrolase superfamily. MetX family. In terms of assembly, homodimer.

It localises to the cytoplasm. It carries out the reaction L-homoserine + acetyl-CoA = O-acetyl-L-homoserine + CoA. Its pathway is amino-acid biosynthesis; L-methionine biosynthesis via de novo pathway; O-acetyl-L-homoserine from L-homoserine: step 1/1. Transfers an acetyl group from acetyl-CoA to L-homoserine, forming acetyl-L-homoserine. This Mycolicibacterium smegmatis (strain ATCC 700084 / mc(2)155) (Mycobacterium smegmatis) protein is Homoserine O-acetyltransferase.